We begin with the raw amino-acid sequence, 611 residues long: Adenosylhomocysteinase 3 (611 aa).

Low complexity-rich tracts occupy residues 1–14 (MSVQ…AAKV), 40–57 (AMAP…APAA), and 68–78 (GPAAALSPAAG). The segment at 1 to 184 (MSVQVVSAAA…KQQKNSKGNS (184 aa)) is disordered. Residue serine 2 is modified to N-acetylserine. Residues 2–109 (SVQVVSAAAA…DGGEALVSPD (108 aa)) form an LISN domain, inhibits interaction with ITPR1 region. Position 107 is a phosphoserine (serine 107). The segment covering 135-144 (RPTKIGRRSL) has biased composition (basic residues). Low complexity predominate over residues 145–164 (SRSISQSSTDSYSSAASYTD). 4 positions are modified to phosphoserine: serine 149, serine 152, serine 155, and serine 158. Substrate is bound by residues threonine 236, aspartate 310, and glutamate 335. 336–338 (SVT) is a binding site for NAD(+). Residues lysine 365 and aspartate 369 each contribute to the substrate site. NAD(+)-binding positions include asparagine 370, 401–406 (GEVGKG), glutamate 422, asparagine 457, 478–479 (MG), and asparagine 525.

Belongs to the adenosylhomocysteinase family. As to quaternary structure, homotetramer. Forms heteromultimers with AHCYL1 (via the C-terminal region). Interacts with ITPR1; with lower affinity than AHCYL1 and maybe via ITPR1. Interacts with SLC4A4. Interacts with ZCCHC4. NAD(+) is required as a cofactor. Post-translationally, phosphorylated during neuronal differentiation at the LISN domain. Expressed in parotid and acinar cells (at protein level).

It is found in the cytoplasm. It localises to the microsome. It carries out the reaction S-adenosyl-L-homocysteine + H2O = L-homocysteine + adenosine. It participates in amino-acid biosynthesis; L-homocysteine biosynthesis; L-homocysteine from S-adenosyl-L-homocysteine: step 1/1. Its function is as follows. May regulate the electrogenic sodium/bicarbonate cotransporter SLC4A4 activity and Mg(2+)-sensitivity. On the contrary of its homolog AHCYL1, does not regulate ITPR1 sensitivity to inositol 1,4,5-trisphosphate. The sequence is that of Adenosylhomocysteinase 3 from Bos taurus (Bovine).